Reading from the N-terminus, the 208-residue chain is Molybdenum cofactor guanylyltransferase (208 aa).

Residues 10–12 (LAG), K23, D69, and D103 contribute to the GTP site. Position 103 (D103) interacts with Mg(2+).

Belongs to the MobA family. Monomer. The cofactor is Mg(2+).

It localises to the cytoplasm. The enzyme catalyses Mo-molybdopterin + GTP + H(+) = Mo-molybdopterin guanine dinucleotide + diphosphate. Transfers a GMP moiety from GTP to Mo-molybdopterin (Mo-MPT) cofactor (Moco or molybdenum cofactor) to form Mo-molybdopterin guanine dinucleotide (Mo-MGD) cofactor. The polypeptide is Molybdenum cofactor guanylyltransferase (Mesorhizobium japonicum (strain LMG 29417 / CECT 9101 / MAFF 303099) (Mesorhizobium loti (strain MAFF 303099))).